The chain runs to 207 residues: A disintegrin and metalloproteinase with thrombospondin motifs 5 (207 aa).

One can recognise a Peptidase M12B domain in the interval 1–74 (HAAFTVAHEI…GHGNCLLDLP (74 aa)). Zn(2+) is bound at residue His8. Residue Glu9 is part of the active site. Zn(2+)-binding residues include His12 and His18. Cystine bridges form between Cys24–Cys53, Cys95–Cys117, Cys106–Cys127, Cys112–Cys146, and Cys140–Cys151. Positions 83–164 (ELPGQTYDAS…TKKKYYSTSS (82 aa)) constitute a Disintegrin domain. N-linked (GlcNAc...) asparagine glycosylation occurs at Asn96. Residues 165–205 (HGNWGSWGSWGQCSRSCGGGVQFAYRHCNNPAPKNNGRYCT) form the TSP type-1 domain. Residues Trp168 and Trp171 are each glycosylated (C-linked (Man) tryptophan). The O-linked (Fuc...) serine glycan is linked to Ser180.

It depends on Zn(2+) as a cofactor. Post-translationally, the precursor is cleaved by furin and PCSK7 outside of the cell. In terms of processing, glycosylated. Can be O-fucosylated by POFUT2 on a serine or a threonine residue found within the consensus sequence C1-X(2)-(S/T)-C2-G of the TSP type-1 repeat domains where C1 and C2 are the first and second cysteine residue of the repeat, respectively. Fucosylated repeats can then be further glycosylated by the addition of a beta-1,3-glucose residue by the glucosyltransferase, B3GALTL. Fucosylation mediates the efficient secretion of ADAMTS family members. Can also be C-glycosylated with one or two mannose molecules on tryptophan residues within the consensus sequence W-X-X-W of the TPRs, and N-glycosylated. These other glycosylations can also facilitate secretion.

It is found in the secreted. Its subcellular location is the extracellular space. The protein resides in the extracellular matrix. Metalloproteinase that plays an important role in connective tissue organization, development, inflammation and cell migration. Extracellular matrix (ECM) degrading enzyme that shows proteolytic activity toward the hyalectan group of chondroitin sulfate proteoglycans (CSPGs) including ACAN, VCAN, BCAN and NCAN. Cleavage within the hyalectans occurs at Glu-Xaa recognition motifs. Plays a role in embryonic development, including limb and cardiac morphogenesis, and skeletal muscle development through its VCAN remodeling properties. Cleaves VCAN in the pericellular matrix surrounding myoblasts, facilitating myoblast contact and fusion which is required for skeletal muscle development and regeneration. Participates in the development of brown adipose tissue and browning of white adipose tissue. Plays an important role for T-lymphocyte migration from draining lymph nodes following viral infection. In Bos taurus (Bovine), this protein is A disintegrin and metalloproteinase with thrombospondin motifs 5 (ADAMTS5).